We begin with the raw amino-acid sequence, 199 residues long: Recombination protein RecR (199 aa).

Residues 57–72 (CSICGNITDEDPCAIC) form a C4-type zinc finger. The Toprim domain occupies 80 to 176 (STILVVEQPK…KVTRLAHGLS (97 aa)).

The protein belongs to the RecR family.

In terms of biological role, may play a role in DNA repair. It seems to be involved in an RecBC-independent recombinational process of DNA repair. It may act with RecF and RecO. The polypeptide is Recombination protein RecR (Lacticaseibacillus casei (strain BL23) (Lactobacillus casei)).